The chain runs to 440 residues: Glycerate 2-kinase (440 aa).

Lys-58 is a binding site for substrate.

This sequence belongs to the glycerate kinase type-1 family. Homodimer. It depends on Mg(2+) as a cofactor. Requires Ni(2+) as cofactor. The cofactor is Mn(2+). Co(2+) is required as a cofactor.

The catalysed reaction is (R)-glycerate + ATP = (2R)-2-phosphoglycerate + ADP + H(+). In terms of biological role, catalyzes the ATP-dependent phosphorylation of D-glycerate to 2-phosphoglycerate. It can also utilize GTP, CTP, UTP, ADP or pyrophosphate as phosphate donor. The protein is Glycerate 2-kinase (gck) of Pyrococcus horikoshii (strain ATCC 700860 / DSM 12428 / JCM 9974 / NBRC 100139 / OT-3).